The chain runs to 496 residues: Polyamine oxidase 6 (496 aa).

Residues 1–27 (MTKPTTMAIFLVLALSIAQLLPSLVAG) form the signal peptide. FAD is bound by residues E61 and R69. N103 and N150 each carry an N-linked (GlcNAc...) asparagine glycan. V261 is an FAD binding site. N-linked (GlcNAc...) asparagine glycosylation is present at N278. An FAD-binding site is contributed by E454.

It belongs to the flavin monoamine oxidase family. FAD is required as a cofactor.

It localises to the secreted. The protein resides in the extracellular space. Its subcellular location is the apoplast. The protein operates within amine and polyamine degradation; spermine degradation. Its function is as follows. Flavoenzyme involved in polyamine back-conversion. Catalyzes the oxidation of the secondary amino group of polyamines, such as spermine and spermidine. This is Polyamine oxidase 6 from Oryza sativa subsp. japonica (Rice).